Consider the following 138-residue polypeptide: MTKPIPRIGSRRNGRIGSRKSGRRIPKGVIHVQASFNNTIVTVTDVLGQVVSWSSAGTCGFRGTRRGTPFAAQTAAGNAIRTVVDQGMQRAEVMIKGPGLGRDAALRAIRRSGILLSFVRDVTPMPHNGCRPPKKRRV.

The disordered stretch occupies residues Met1 to Arg24. Positions Gly9 to Arg24 are enriched in basic residues.

The protein belongs to the universal ribosomal protein uS11 family. As to quaternary structure, part of the 30S ribosomal subunit.

Its subcellular location is the plastid. It localises to the chloroplast. This Liriodendron tulipifera (Tuliptree) protein is Small ribosomal subunit protein uS11c.